A 141-amino-acid chain; its full sequence is Large-conductance mechanosensitive channel (141 aa).

A run of 3 helical transmembrane segments spans residues 16–36 (VIDL…VDSV), 40–60 (LIMP…MFIV), and 86–106 (GNFL…FLMV).

This sequence belongs to the MscL family. Homopentamer.

Its subcellular location is the cell inner membrane. Channel that opens in response to stretch forces in the membrane lipid bilayer. May participate in the regulation of osmotic pressure changes within the cell. This Cupriavidus necator (strain ATCC 17699 / DSM 428 / KCTC 22496 / NCIMB 10442 / H16 / Stanier 337) (Ralstonia eutropha) protein is Large-conductance mechanosensitive channel.